The sequence spans 519 residues: Halolysin (519 aa).

Residues 1-27 (MAGTPNFDRRSFLRLAAAAGLTGMAGV) constitute a signal peptide (tat-type signal). A propeptide spanning residues 28 to 116 (TSATPGRSPG…AEKNATHEAL (89 aa)) is cleaved from the precursor. The Peptidase S8 domain occupies 127–400 (QYAPQQVNAD…SGRVDAANAV (274 aa)). Catalysis depends on charge relay system residues aspartate 154, histidine 193, and serine 347. A disordered region spans residues 386-425 (STKQGSGRVDAANAVTTDPGDGGGGGGGGSKETTYDGTLS). Residues 405–415 (GDGGGGGGGGS) show a composition bias toward gly residues.

It belongs to the peptidase S8 family. Predicted to be exported by the Tat system. The position of the signal peptide cleavage has not been experimentally proven.

It is found in the secreted. Its function is as follows. Probable secreted halophilic serine protease showing proteolytic activity toward the protease general substrate azocasein. The protein is Halolysin (hly) of Haloferax mediterranei (strain ATCC 33500 / DSM 1411 / JCM 8866 / NBRC 14739 / NCIMB 2177 / R-4) (Halobacterium mediterranei).